The sequence spans 158 residues: Cyclic pyranopterin monophosphate synthase (158 aa).

Substrate-binding positions include 75-77 (LCH) and 113-114 (ME). Aspartate 128 is an active-site residue.

It belongs to the MoaC family. As to quaternary structure, homohexamer; trimer of dimers.

It catalyses the reaction (8S)-3',8-cyclo-7,8-dihydroguanosine 5'-triphosphate = cyclic pyranopterin phosphate + diphosphate. Its pathway is cofactor biosynthesis; molybdopterin biosynthesis. Functionally, catalyzes the conversion of (8S)-3',8-cyclo-7,8-dihydroguanosine 5'-triphosphate to cyclic pyranopterin monophosphate (cPMP). This is Cyclic pyranopterin monophosphate synthase from Histophilus somni (strain 2336) (Haemophilus somnus).